The chain runs to 623 residues: Chaperone protein HtpG (623 aa).

Positions M1–R326 are a; substrate-binding. The segment at E327–K543 is b. Positions M544–G623 are c.

Belongs to the heat shock protein 90 family. Homodimer.

Its subcellular location is the cytoplasm. Molecular chaperone. Has ATPase activity. The polypeptide is Chaperone protein HtpG (Paramagnetospirillum magneticum (strain ATCC 700264 / AMB-1) (Magnetospirillum magneticum)).